The sequence spans 571 residues: Endonuclease/exonuclease/phosphatase family domain-containing protein 1 (571 aa).

The interval 1–20 is disordered; the sequence is MGSTLGCHRSIPRDPSDLSH. A lipid anchor (N-myristoyl glycine) is attached at G2. Positions 11–20 are enriched in basic and acidic residues; that stretch reads IPRDPSDLSH. Phosphoserine is present on residues S16, S21, and S25. Positions 38–67 constitute a HhH domain; it reads ERLNINTATEEELMTLPGVTRAVARSIVEY. Residues S106, S110, S162, and S175 each carry the phosphoserine modification. The interval 202–227 is disordered; it reads SRPPSTHTNGGLTFTAKPHPSPTSLS. Polar residues predominate over residues 204–213; that stretch reads PPSTHTNGGL. A Phosphothreonine modification is found at T267. S430 bears the Phosphoserine mark. The tract at residues 548–571 is disordered; the sequence is RKEGPRSGNGLTLERSEANIKHER. Residues 561 to 571 show a composition bias toward basic and acidic residues; sequence ERSEANIKHER.

This Bos taurus (Bovine) protein is Endonuclease/exonuclease/phosphatase family domain-containing protein 1 (EEPD1).